A 240-amino-acid chain; its full sequence is Probable transcriptional regulatory protein Nmul_A2722 (240 aa).

Belongs to the TACO1 family.

Its subcellular location is the cytoplasm. This is Probable transcriptional regulatory protein Nmul_A2722 from Nitrosospira multiformis (strain ATCC 25196 / NCIMB 11849 / C 71).